We begin with the raw amino-acid sequence, 232 residues long: Large ribosomal subunit protein uL1 (232 aa).

Belongs to the universal ribosomal protein uL1 family. In terms of assembly, part of the 50S ribosomal subunit.

Functionally, binds directly to 23S rRNA. The L1 stalk is quite mobile in the ribosome, and is involved in E site tRNA release. Protein L1 is also a translational repressor protein, it controls the translation of the L11 operon by binding to its mRNA. In Bordetella petrii (strain ATCC BAA-461 / DSM 12804 / CCUG 43448), this protein is Large ribosomal subunit protein uL1.